Here is a 377-residue protein sequence, read N- to C-terminus: Benzylmalonyl-CoA dehydrogenase (377 aa).

FAD-binding positions include 123-132, 156-158, Arg-266, Gln-277, and 363-365; these read ICMTEPNAGS, WIT, and TSE.

It belongs to the acyl-CoA dehydrogenase family. As to quaternary structure, homotetramer. It depends on FAD as a cofactor.

The enzyme catalyses (2-aminobenzyl)malonyl-CoA + O2 + H(+) = (E)-2-aminocinnamoyl-CoA + H2O2 + CO2. It catalyses the reaction benzylmalonyl-CoA + O2 + H(+) = (E)-cinnamoyl-CoA + H2O2 + CO2. Functionally, involved in degradation of indoleacetate, the most common member of the auxin class of plant hormones. Catalyzes the irreversible oxidative decarboxylation of (2-aminobenzyl)malonyl-CoA to 2-aminocinnamoyl-CoA and CO(2). In vitro, shows high catalytic efficiency with benzylmalonyl-CoA, a chemical analog of the physiological substrate, but otherwise accepts only a few medium-chain alkylmalonyl-CoA compounds as alternative substrates with low activities. In Aromatoleum aromaticum (strain DSM 19018 / LMG 30748 / EbN1) (Azoarcus sp. (strain EbN1)), this protein is Benzylmalonyl-CoA dehydrogenase.